A 121-amino-acid chain; its full sequence is Large ribosomal subunit protein uL14 (121 aa).

This sequence belongs to the universal ribosomal protein uL14 family. Part of the 50S ribosomal subunit. Forms a cluster with proteins L3 and L19. In the 70S ribosome, L14 and L19 interact and together make contacts with the 16S rRNA in bridges B5 and B8.

Binds to 23S rRNA. Forms part of two intersubunit bridges in the 70S ribosome. The chain is Large ribosomal subunit protein uL14 from Legionella pneumophila (strain Corby).